The following is an 870-amino-acid chain: DNA-directed RNA polymerase subunit Rpo1N (870 aa).

C60, C63, C70, H73, C100, C103, C146, and C149 together coordinate Zn(2+). Mg(2+)-binding residues include D451, D453, and D455.

This sequence belongs to the RNA polymerase beta' chain family. In terms of assembly, part of the RNA polymerase complex. The cofactor is Mg(2+). It depends on Zn(2+) as a cofactor.

The protein localises to the cytoplasm. The enzyme catalyses RNA(n) + a ribonucleoside 5'-triphosphate = RNA(n+1) + diphosphate. Its function is as follows. DNA-dependent RNA polymerase (RNAP) catalyzes the transcription of DNA into RNA using the four ribonucleoside triphosphates as substrates. Forms the clamp head domain. The protein is DNA-directed RNA polymerase subunit Rpo1N of Methanothermobacter thermautotrophicus (strain ATCC 29096 / DSM 1053 / JCM 10044 / NBRC 100330 / Delta H) (Methanobacterium thermoautotrophicum).